We begin with the raw amino-acid sequence, 594 residues long: Fidgetin-like protein 1 (594 aa).

Disordered stretches follow at residues 1 to 79 and 239 to 261; these read MYSP…DDEL and QSIG…KRCS. Positions 56–73 are enriched in polar residues; the sequence is PSDSAQQQPPFKSRSQQN. Residues A319 and 359 to 364 each bind ATP; that span reads GTGKTM.

This sequence belongs to the AAA ATPase family. Hexamer. It depends on Mg(2+) as a cofactor. Expressed in germ cells.

The protein resides in the nucleus. The catalysed reaction is ATP + H2O = ADP + phosphate + H(+). In terms of biological role, has a role in spindle assembly which acts in the progression through mitosis during embryogenesis. Required for fertility. This is Fidgetin-like protein 1 (figl-1) from Caenorhabditis elegans.